The primary structure comprises 154 residues: MHCPFCNAPDTKVIDSRLATEGAQVRRRRECMSCAERFTTYETAELTLPRVIKSDGNRERFDDDKIRRGLIKALEKRPVASEAIDQVVNRIHKQLTAEGVREIPSSQIGELLMEALKELDQVAYVRFASVYRSFQDVNAFREEIEKLVKATKSQ.

A zinc finger spans residues 3 to 34 (CPFCNAPDTKVIDSRLATEGAQVRRRRECMSC). Positions 49 to 139 (PRVIKSDGNR…VYRSFQDVNA (91 aa)) constitute an ATP-cone domain.

Belongs to the NrdR family. Zn(2+) is required as a cofactor.

In terms of biological role, negatively regulates transcription of bacterial ribonucleotide reductase nrd genes and operons by binding to NrdR-boxes. This Hydrogenovibrio crunogenus (strain DSM 25203 / XCL-2) (Thiomicrospira crunogena) protein is Transcriptional repressor NrdR.